We begin with the raw amino-acid sequence, 451 residues long: Chromosomal replication initiator protein DnaA (451 aa).

The domain I, interacts with DnaA modulators stretch occupies residues 1–72; it reads MQSIEDIWQE…ANILQEITGR (72 aa). Positions 72 to 108 are domain II; sequence RLFDVRFIDGEQEENFEYTVIKPNPALDEDGIEIGKH. Residues 109–325 form a domain III, AAA+ region region; it reads MLNPRYVFDT…GALIRVVAYS (217 aa). The ATP site is built by glycine 153, glycine 155, lysine 156, and threonine 157. The interval 326–451 is domain IV, binds dsDNA; it reads SLVNKDITAG…KNLRKSQNMF (126 aa).

It belongs to the DnaA family. As to quaternary structure, oligomerizes as a right-handed, spiral filament on DNA at oriC.

Its subcellular location is the cytoplasm. Its function is as follows. Plays an essential role in the initiation and regulation of chromosomal replication. ATP-DnaA binds to the origin of replication (oriC) to initiate formation of the DNA replication initiation complex once per cell cycle. Binds the DnaA box (a 9 base pair repeat at the origin) and separates the double-stranded (ds)DNA. Forms a right-handed helical filament on oriC DNA; dsDNA binds to the exterior of the filament while single-stranded (ss)DNA is stabiized in the filament's interior. The ATP-DnaA-oriC complex binds and stabilizes one strand of the AT-rich DNA unwinding element (DUE), permitting loading of DNA polymerase. After initiation quickly degrades to an ADP-DnaA complex that is not apt for DNA replication. Binds acidic phospholipids. The protein is Chromosomal replication initiator protein DnaA of Listeria welshimeri serovar 6b (strain ATCC 35897 / DSM 20650 / CCUG 15529 / CIP 8149 / NCTC 11857 / SLCC 5334 / V8).